Consider the following 397-residue polypeptide: LIM/homeobox protein Lhx9 (397 aa).

Residues 40-60 (RSKTESRLAKGGQMNGRETNM) form a disordered region. 2 consecutive LIM zinc-binding domains span residues 69 to 130 (ALCA…RFSV) and 131 to 193 (QRCA…LLQG). The segment at residues 267 to 326 (TKRMATSFKHHQLRTMKSYFAINHNPDAKDLKQLAQKTGLTKRVLQVWFQNARAKFRRNL) is a DNA-binding region (homeobox). Disordered regions lie at residues 330-363 (ENGG…TTLT) and 378-397 (SNLD…TNLF). Low complexity predominate over residues 353 to 363 (LTPPGTATTLT). Residues 387 to 397 (SPSQTTLTNLF) are compositionally biased toward polar residues.

The protein localises to the nucleus. May be involved in gonadal development. This chain is LIM/homeobox protein Lhx9 (LHX9), found in Gallus gallus (Chicken).